The sequence spans 1342 residues: MVYSYTERKRIRKDFGKRPQVLDIPYLLAIQINSFKKFIEKDPEGLYGLEAAFKSIFPIKSYSGNAELKYISYRLGCSVFNVKECQTRGTTFSAPLRVILQLIIYCDESKHVVKNIKEQEVYMGEIPLMTDNGTFIINGTERVVVSQLHRSPGVFFDSDKGKTHSSGKVLYNARIIPYRGSWLDFEFDAKDHLFIRIDRRRKLPVTVLLKALNFSDGEILNIFFEKVNFFIRKKNLLMELIPKRLRGETALFDICENGITYIKKGRRITAKHIRNLENDKISQITVPFEYIIGKVSAKNYFDKKTEKPIITANTELTVDLMLNLFKSGYKSIETLFTNDLDHGSYISETLRIDSTTDKTSALIEIYRMMRPGEPPTKEAAENLFYNLFFSEDRYDLSSVGRMKFNKSLSINSSEGSSLLDKFDIIEVTKKLIDIRNGKGDVDDIDHLGNRRIRSVGEMAENQFRIGLVRVERAVKERLSLGDLDTIMPQDMINAKPISAAVKEFFGSSQLSQFMDQNNPLSEITHKRRISALGPGGLTRERAGFEVRDVHPTHYGRVCPIETPEGPNIGLINSLSVYARTNEYGFLETPYRCVLNGIVTNNIHYLSAIEEGKFIIAQANTNLDKNGYFINEFVTCRNKGESSLFNRNQVNYMDVSTQQIVSVGASLIPFLEHDDANRALMGANMQRQAVPTLMTEKPLIGTGMERAVAVDSGVTAVAKRGGIVQFLDSSKIIIKVNQEEIIKEKIGIDIYHLTKYVRSNQNTCINQTPCVCLNDVVERGDVLADGPSTDLGELALGQNMRIAFMPWNGYNFEDSMLVSEKVVHEDRFTTIHIQELACMSRDTKLGSEEITSDIPNVSETSLLKLDESGIVYIGAEVKGGDILVGKVTPKGETQLTPEEKLLRAIFGEKASDVKDSSLRVPNGVSGTVIDVEIFTRDGVKKDKRALEIEYMQIKEAKKDIYEELEIFKSSLKIQIEYFLKENNIEYDSLSELLKGNIKNLIFKNNNLNNIFEELINKFLRLKEEFEKKLEIKIKKITQGDDLAPGVLKIVKVYLAVKRQIQPGDKMAGRHGNKGVISKINPIEDMPYDENGVPVDMVLNPLGVPSRMNIGQILETHLGLAAKGIGNIIDNMLKNNKKIYKIKKFIQNAYNLGIGIRQKVELDHFSDKEIIKLANNLRKGMPIATPVFDGAQEIEIKELLKFSGNPESGQITLFDGQTGEKFDRPVTVGYMYMLKLNHLVDDKMHARSTGSYSLVTQQPLGGKAQFGGQRFGEMEVWALEAYGAAYSLQEMLTVKSDDVNGRTKMYKNIVDGSHLMEPGMPESFNVLLKEIRSLGINIELEENN.

It belongs to the RNA polymerase beta chain family. The RNAP catalytic core consists of 2 alpha, 1 beta, 1 beta' and 1 omega subunit. When a sigma factor is associated with the core the holoenzyme is formed, which can initiate transcription.

It catalyses the reaction RNA(n) + a ribonucleoside 5'-triphosphate = RNA(n+1) + diphosphate. DNA-dependent RNA polymerase catalyzes the transcription of DNA into RNA using the four ribonucleoside triphosphates as substrates. This Wigglesworthia glossinidia brevipalpis protein is DNA-directed RNA polymerase subunit beta.